Here is a 1080-residue protein sequence, read N- to C-terminus: DNA polymerase II large subunit (1080 aa).

It belongs to the archaeal DNA polymerase II family. In terms of assembly, heterodimer of a large subunit and a small subunit.

It carries out the reaction DNA(n) + a 2'-deoxyribonucleoside 5'-triphosphate = DNA(n+1) + diphosphate. It catalyses the reaction Exonucleolytic cleavage in the 3'- to 5'-direction to yield nucleoside 5'-phosphates.. Possesses two activities: a DNA synthesis (polymerase) and an exonucleolytic activity that degrades single-stranded DNA in the 3'- to 5'-direction. Has a template-primer preference which is characteristic of a replicative DNA polymerase. This Picrophilus torridus (strain ATCC 700027 / DSM 9790 / JCM 10055 / NBRC 100828 / KAW 2/3) protein is DNA polymerase II large subunit.